A 434-amino-acid polypeptide reads, in one-letter code: UDP-N-acetylmuramoylalanine--D-glutamate ligase (434 aa).

Residue 113–119 participates in ATP binding; that stretch reads GSNGKST.

It belongs to the MurCDEF family.

Its subcellular location is the cytoplasm. The enzyme catalyses UDP-N-acetyl-alpha-D-muramoyl-L-alanine + D-glutamate + ATP = UDP-N-acetyl-alpha-D-muramoyl-L-alanyl-D-glutamate + ADP + phosphate + H(+). Its pathway is cell wall biogenesis; peptidoglycan biosynthesis. In terms of biological role, cell wall formation. Catalyzes the addition of glutamate to the nucleotide precursor UDP-N-acetylmuramoyl-L-alanine (UMA). This chain is UDP-N-acetylmuramoylalanine--D-glutamate ligase, found in Pasteurella multocida (strain Pm70).